A 660-amino-acid chain; its full sequence is MPDSIVHVKKGQRFLDVIKDKNVVAVKIDSVLHDLRDVAERDVDAIPVSVYSDDGLYILRHSAAHLLANAVTNLYPDALPNTGPVVENGFYYDFDMKPIGEEDLAKIEDEMRRIQKENVPIERIVYQKADLLRIFAKNPYKIRIIEDNVSDASSVYRQGNFVDLCLGPHVPSTGYIKAFKLLNIASAVYKHDESKTLVRIYGTAFPDEKLLKQYLNNLEEAKRRDHRRIIAEMDLAVFNSEWAPGFPLYTQYGQTIRKELLSYMDSMNRKNGWFDVWTPHVFRDTIWKQSGHYAKYRPNMYLFTLPDGDSYGIKPMNCPGHIAIFSRRKYSYRDLPVRYSEPGTVYRYEKSGEVGGLTRPRAFTQDDGHAFLRMDQIGDEIRTLLTMVKDVFTILFGNIELSFDLSVIDRDHPENYLVSYVCRNCGYRIEGARGTDIECPVCHSHDLEPDLSVWDNATEQLRDALKSMGIEYKEYPGEAAFYGPKIDVHVKDAIGRMWQLSTIQLDFFMPVNFGLTYTNSEGKEDRVVMIHRAIYGSYERVMAILLEHYAGKLPTWLTPIQTYVVPISSNFDEYARHVHEELIRHGIRSEIDTSQETVSKKIKLIHPYRPAYIIVVGSKEMETNSVTARNREGKSKTYSLSEFIDVVKKEIEQRKVDQAF.

The 49-residue stretch at 1 to 49 (MPDSIVHVKKGQRFLDVIKDKNVVAVKIDSVLHDLRDVAERDVDAIPVS) folds into the TGS domain. Residues 225-554 (DHRRIIAEMD…LLEHYAGKLP (330 aa)) are catalytic. Residues Cys318, His369, and His531 each coordinate Zn(2+).

It belongs to the class-II aminoacyl-tRNA synthetase family. In terms of assembly, homodimer. The cofactor is Zn(2+).

It is found in the cytoplasm. The enzyme catalyses tRNA(Thr) + L-threonine + ATP = L-threonyl-tRNA(Thr) + AMP + diphosphate + H(+). Its function is as follows. Catalyzes the attachment of threonine to tRNA(Thr) in a two-step reaction: L-threonine is first activated by ATP to form Thr-AMP and then transferred to the acceptor end of tRNA(Thr). The chain is Threonine--tRNA ligase from Thermoplasma acidophilum (strain ATCC 25905 / DSM 1728 / JCM 9062 / NBRC 15155 / AMRC-C165).